The primary structure comprises 543 residues: Cytochrome P450 2U1 (543 aa).

4 helical membrane passes run 32–52 (PTGGALLLLVLAALLGWSWLW), 58–78 (GIPPGPAPWPVVGNFGFVLLP), 261–281 (VCLNTQLLLVNICSWLYYLPF), and 342–362 (LFYIIGDLFIAGTDTTTNSLL). C490 contributes to the heme binding site. A helical transmembrane segment spans residues 495 to 515 (LAKMELFLMFVSLMQSFTFVL).

The protein belongs to the cytochrome P450 family. Heme is required as a cofactor.

The protein localises to the endoplasmic reticulum membrane. The protein resides in the microsome membrane. Its subcellular location is the mitochondrion inner membrane. It catalyses the reaction an omega-methyl-long-chain fatty acid + reduced [NADPH--hemoprotein reductase] + O2 = an omega-hydroxy-long-chain fatty acid + oxidized [NADPH--hemoprotein reductase] + H2O + H(+). The catalysed reaction is (5Z,8Z,11Z,14Z)-eicosatetraenoate + reduced [NADPH--hemoprotein reductase] + O2 = 19-hydroxy-(5Z,8Z,11Z,14Z)-eicosatetraenoate + oxidized [NADPH--hemoprotein reductase] + H2O + H(+). The enzyme catalyses (5Z,8Z,11Z,14Z)-eicosatetraenoate + reduced [NADPH--hemoprotein reductase] + O2 = 20-hydroxy-(5Z,8Z,11Z,14Z)-eicosatetraenoate + oxidized [NADPH--hemoprotein reductase] + H2O + H(+). It carries out the reaction N-[(5Z,8Z,11Z,14Z)-eicosatetraenoyl]-serotonin + reduced [NADPH--hemoprotein reductase] + O2 = 2-oxo-N-[(5Z,8Z,11Z,14Z)-eicosatetraenoyl]-serotonin + oxidized [NADPH--hemoprotein reductase] + H2O + H(+). In terms of biological role, a cytochrome P450 monooxygenase involved in the metabolism of arachidonic acid and its conjugates. Mechanistically, uses molecular oxygen inserting one oxygen atom into a substrate, and reducing the second into a water molecule, with two electrons provided by NADPH via cytochrome P450 reductase (CPR; NADPH-ferrihemoprotein reductase). Acts as an omega and omega-1 hydroxylase for arachidonic acid and possibly for other long chain fatty acids. May modulate the arachidonic acid signaling pathway and play a role in other fatty acid signaling processes. May down-regulate the biological activities of N-arachidonoyl-serotonin, an endocannabinoid that has anti-nociceptive effects through inhibition of fatty acid amide hydrolase FAAH, TRPV1 receptor and T-type calcium channels. Catalyzes C-2 oxidation of the indole ring of N-arachidonoyl-serotonin forming a less active product 2-oxo-N-arachidonoyl-serotonin. The sequence is that of Cytochrome P450 2U1 (CYP2U1) from Bos taurus (Bovine).